The sequence spans 336 residues: Holliday junction branch migration complex subunit RuvB (336 aa).

The interval Ala4 to Tyr184 is large ATPase domain (RuvB-L). ATP is bound by residues Arg24, Gly65, Lys68, Thr69, Thr70, Glu131–Tyr133, Arg174, Tyr184, and Arg221. Position 69 (Thr69) interacts with Mg(2+). The tract at residues Asn185 to Asp255 is small ATPAse domain (RuvB-S). The tract at residues Asp258 to Ala336 is head domain (RuvB-H). DNA-binding residues include Arg294, Arg313, and Arg318.

Belongs to the RuvB family. Homohexamer. Forms an RuvA(8)-RuvB(12)-Holliday junction (HJ) complex. HJ DNA is sandwiched between 2 RuvA tetramers; dsDNA enters through RuvA and exits via RuvB. An RuvB hexamer assembles on each DNA strand where it exits the tetramer. Each RuvB hexamer is contacted by two RuvA subunits (via domain III) on 2 adjacent RuvB subunits; this complex drives branch migration. In the full resolvosome a probable DNA-RuvA(4)-RuvB(12)-RuvC(2) complex forms which resolves the HJ.

The protein localises to the cytoplasm. The catalysed reaction is ATP + H2O = ADP + phosphate + H(+). The RuvA-RuvB-RuvC complex processes Holliday junction (HJ) DNA during genetic recombination and DNA repair, while the RuvA-RuvB complex plays an important role in the rescue of blocked DNA replication forks via replication fork reversal (RFR). RuvA specifically binds to HJ cruciform DNA, conferring on it an open structure. The RuvB hexamer acts as an ATP-dependent pump, pulling dsDNA into and through the RuvAB complex. RuvB forms 2 homohexamers on either side of HJ DNA bound by 1 or 2 RuvA tetramers; 4 subunits per hexamer contact DNA at a time. Coordinated motions by a converter formed by DNA-disengaged RuvB subunits stimulates ATP hydrolysis and nucleotide exchange. Immobilization of the converter enables RuvB to convert the ATP-contained energy into a lever motion, pulling 2 nucleotides of DNA out of the RuvA tetramer per ATP hydrolyzed, thus driving DNA branch migration. The RuvB motors rotate together with the DNA substrate, which together with the progressing nucleotide cycle form the mechanistic basis for DNA recombination by continuous HJ branch migration. Branch migration allows RuvC to scan DNA until it finds its consensus sequence, where it cleaves and resolves cruciform DNA. In Shewanella frigidimarina (strain NCIMB 400), this protein is Holliday junction branch migration complex subunit RuvB.